Reading from the N-terminus, the 181-residue chain is MRILGIDPGLRTTGFGVIEKQGNKLAYIASGTIKSDGNANLPERLKTLYDGISEVSRTYAPDCAAIEKVFVNVNPQSTLLLGQARGAAICGLVGYGLPVFEYTALQLKVAVVGYGRANKAQVQEMVTRLLMLPGQPGSDAADALGVAICHANGGDTLGTLAGLAPDLVRKGMRVRRGRLVG.

Active-site residues include D7, E67, and D139. D7, E67, and D139 together coordinate Mg(2+).

Belongs to the RuvC family. In terms of assembly, homodimer which binds Holliday junction (HJ) DNA. The HJ becomes 2-fold symmetrical on binding to RuvC with unstacked arms; it has a different conformation from HJ DNA in complex with RuvA. In the full resolvosome a probable DNA-RuvA(4)-RuvB(12)-RuvC(2) complex forms which resolves the HJ. The cofactor is Mg(2+).

The protein localises to the cytoplasm. It catalyses the reaction Endonucleolytic cleavage at a junction such as a reciprocal single-stranded crossover between two homologous DNA duplexes (Holliday junction).. The RuvA-RuvB-RuvC complex processes Holliday junction (HJ) DNA during genetic recombination and DNA repair. Endonuclease that resolves HJ intermediates. Cleaves cruciform DNA by making single-stranded nicks across the HJ at symmetrical positions within the homologous arms, yielding a 5'-phosphate and a 3'-hydroxyl group; requires a central core of homology in the junction. The consensus cleavage sequence is 5'-(A/T)TT(C/G)-3'. Cleavage occurs on the 3'-side of the TT dinucleotide at the point of strand exchange. HJ branch migration catalyzed by RuvA-RuvB allows RuvC to scan DNA until it finds its consensus sequence, where it cleaves and resolves the cruciform DNA. In Cupriavidus taiwanensis (strain DSM 17343 / BCRC 17206 / CCUG 44338 / CIP 107171 / LMG 19424 / R1) (Ralstonia taiwanensis (strain LMG 19424)), this protein is Crossover junction endodeoxyribonuclease RuvC.